The primary structure comprises 90 residues: Small ribosomal subunit protein bS20 (90 aa).

The protein belongs to the bacterial ribosomal protein bS20 family.

Its function is as follows. Binds directly to 16S ribosomal RNA. In Rickettsia akari (strain Hartford), this protein is Small ribosomal subunit protein bS20.